Reading from the N-terminus, the 218-residue chain is Hypoxanthine-guanine phosphoribosyltransferase (218 aa).

Ala-2 is subject to N-acetylalanine. Lys-69 is a binding site for GMP. Lys-103 carries the post-translational modification N6-acetyllysine. Lys-115 participates in a covalent cross-link: Glycyl lysine isopeptide (Lys-Gly) (interchain with G-Cter in SUMO1); alternate. Lys-115 is covalently cross-linked (Glycyl lysine isopeptide (Lys-Gly) (interchain with G-Cter in SUMO2); alternate). Residues 134–142 (EDIIDTGKT), Lys-166, 186–188 (KFV), and Asp-194 contribute to the GMP site. Asp-138 acts as the Proton acceptor in catalysis. The residue at position 142 (Thr-142) is a Phosphothreonine. Mg(2+) is bound at residue Asp-194.

This sequence belongs to the purine/pyrimidine phosphoribosyltransferase family. In terms of assembly, homotetramer. Requires Mg(2+) as cofactor.

It is found in the cytoplasm. It catalyses the reaction IMP + diphosphate = hypoxanthine + 5-phospho-alpha-D-ribose 1-diphosphate. It carries out the reaction GMP + diphosphate = guanine + 5-phospho-alpha-D-ribose 1-diphosphate. The protein operates within purine metabolism; IMP biosynthesis via salvage pathway; IMP from hypoxanthine: step 1/1. In terms of biological role, converts guanine to guanosine monophosphate, and hypoxanthine to inosine monophosphate. Transfers the 5-phosphoribosyl group from 5-phosphoribosylpyrophosphate onto the purine. Plays a central role in the generation of purine nucleotides through the purine salvage pathway. The protein is Hypoxanthine-guanine phosphoribosyltransferase (HPRT1) of Canis lupus familiaris (Dog).